The following is a 122-amino-acid chain: Histone H2B 1 (122 aa).

The tract at residues 1 to 30 (MPPKPSAKGAKKAAKTVTKPKDGKKRRHAR) is disordered. Ser-109 carries O-linked (GlcNAc) serine glycosylation. Lys-117 participates in a covalent cross-link: Glycyl lysine isopeptide (Lys-Gly) (interchain with G-Cter in ubiquitin).

It belongs to the histone H2B family. In terms of assembly, the nucleosome is a histone octamer containing two molecules each of H2A, H2B, H3 and H4 assembled in one H3-H4 heterotetramer and two H2A-H2B heterodimers. The octamer wraps approximately 147 bp of DNA. Monoubiquitination of Lys-117 gives a specific tag for epigenetic transcriptional activation and is also prerequisite for histone H3 'Lys-4' and 'Lys-79' methylation. In terms of processing, glcNAcylation at Ser-109 promotes monoubiquitination of Lys-117. It fluctuates in response to extracellular glucose, and associates with transcribed genes.

The protein localises to the nucleus. Its subcellular location is the chromosome. Functionally, core component of nucleosome. Nucleosomes wrap and compact DNA into chromatin, limiting DNA accessibility to the cellular machineries which require DNA as a template. Histones thereby play a central role in transcription regulation, DNA repair, DNA replication and chromosomal stability. DNA accessibility is regulated via a complex set of post-translational modifications of histones, also called histone code, and nucleosome remodeling. The chain is Histone H2B 1 (his-11) from Caenorhabditis elegans.